The primary structure comprises 454 residues: MAAWKSWTALRLCATVVVLDMVVCKGFVEDLDESFKENRNDDIWLVDFYAPWCGHCKKLEPIWNEVGLEMKSIGSPVKVGKMDATSYSSIASEFGVRGYPTIKLLKGDLAYNYRGPRTKDDIIEFAHRVSGALIRPLPSQQMFEHMQKRHRVFFVYVGGESPLKEKYIDAASELIVYTYFFSASEEVVPEYVTLKEMPAVLVFKDETYFVYDEYEDGDLSSWINRERFQNYLAMDGFLLYELGDTGKLVALAVIDEKNTSVEHTRLKSIIQEVARDYRDLFHRDFQFGHMDGNDYINTLLMDELTVPTVVVLNTSNQQYFLLDRQIKNVEDMVQFINNILDGTVEAQGGDSILQRLKRIVFDAKSTIVSIFKSSPLMGCFLFGLPLGVISIMCYGIYTADTDGGYIEERYEVSKSENENQEQIEESKEQQEPSSGGSVVPTVQEPKDVLEKKKD.

The signal sequence occupies residues 1–24; that stretch reads MAAWKSWTALRLCATVVVLDMVVC. A Thioredoxin domain is found at 25-128; sequence KGFVEDLDES…KDDIIEFAHR (104 aa). Residues 25–375 are Lumenal-facing; it reads KGFVEDLDES…TIVSIFKSSP (351 aa). Catalysis depends on nucleophile residues Cys53 and Cys56. A disulfide bridge links Cys53 with Cys56. N-linked (GlcNAc...) asparagine glycans are attached at residues Asn258 and Asn313. A helical membrane pass occupies residues 376–396; sequence LMGCFLFGLPLGVISIMCYGI. The Cytoplasmic portion of the chain corresponds to 397-454; that stretch reads YTADTDGGYIEERYEVSKSENENQEQIEESKEQQEPSSGGSVVPTVQEPKDVLEKKKD. Positions 412–454 are disordered; it reads VSKSENENQEQIEESKEQQEPSSGGSVVPTVQEPKDVLEKKKD. Residues 444–454 are compositionally biased toward basic and acidic residues; sequence EPKDVLEKKKD. Residues 451 to 454 carry the Di-lysine motif motif; it reads KKKD.

This sequence belongs to the protein disulfide isomerase family. Post-translationally, N-glycosylated. Widely expressed. Expressed in brain, testis, lung, skin, kidney, uterus, bone, stomach, liver, prostate, placenta, eye and muscle.

It localises to the endoplasmic reticulum membrane. The enzyme catalyses Catalyzes the rearrangement of -S-S- bonds in proteins.. In terms of biological role, probable disulfide isomerase, which participates in the folding of proteins containing disulfide bonds. May act as a dithiol oxidase. Acts as a regulator of endoplasmic reticulum-mitochondria contact sites via its ability to regulate redox signals. This Homo sapiens (Human) protein is Protein disulfide-isomerase TMX3 (TMX3).